We begin with the raw amino-acid sequence, 200 residues long: Large ribosomal subunit protein uL4 (200 aa).

Positions 43–65 (RAQKTRSEVSGGGAKPWRQKGTG) are disordered.

This sequence belongs to the universal ribosomal protein uL4 family. As to quaternary structure, part of the 50S ribosomal subunit.

Functionally, one of the primary rRNA binding proteins, this protein initially binds near the 5'-end of the 23S rRNA. It is important during the early stages of 50S assembly. It makes multiple contacts with different domains of the 23S rRNA in the assembled 50S subunit and ribosome. Forms part of the polypeptide exit tunnel. This Aliivibrio salmonicida (strain LFI1238) (Vibrio salmonicida (strain LFI1238)) protein is Large ribosomal subunit protein uL4.